Here is a 413-residue protein sequence, read N- to C-terminus: Lamin tail domain-containing protein 1 (413 aa).

2 disordered regions span residues 1-25 (MMKE…VQDG) and 102-128 (HKDS…SDVD). Polar residues predominate over residues 107–128 (LGKQSTSSMVPRRQPQSSSDVD). An LTD domain is found at 169–287 (EVGQFTSSSL…EAIAWYTPIH (119 aa)). Positions 356–413 (LPNKSPWCRNPNTSPHPYSSLIDSHDSDISESSLDTQLKPQPTKPKPDPGTKKKKAKS) are disordered. Low complexity predominate over residues 385-396 (SESSLDTQLKPQ).

It belongs to the intermediate filament family.

This Mus musculus (Mouse) protein is Lamin tail domain-containing protein 1 (Lmntd1).